The following is a 99-amino-acid chain: Plastocyanin (99 aa).

The Plastocyanin-like domain occupies 1-99 (IEVLLGSDDG…AGMVGKVTVN (99 aa)). Cu cation-binding residues include His37, Cys84, His87, and Met92.

Belongs to the plastocyanin family. Cu(2+) serves as cofactor.

The protein localises to the plastid. It localises to the chloroplast thylakoid membrane. Its function is as follows. Participates in electron transfer between P700 and the cytochrome b6-f complex in photosystem I. The chain is Plastocyanin (PETE) from Solanum crispum (Chilean potato-tree).